Consider the following 81-residue polypeptide: U17-lycotoxin-Ls1a (81 aa).

Positions Met1–Ala22 are cleaved as a signal peptide. Residues Gln23–Arg34 constitute a propeptide that is removed on maturation. 3 disulfides stabilise this stretch: Cys36-Cys51, Cys50-Cys67, and Cys58-Cys65.

The protein belongs to the neurotoxin 02 (plectoxin) family. As to expression, expressed by the venom gland.

Its subcellular location is the secreted. The chain is U17-lycotoxin-Ls1a from Lycosa singoriensis (Wolf spider).